A 273-amino-acid chain; its full sequence is Probable nicotinate-nucleotide pyrophosphorylase [carboxylating] (273 aa).

Residues Arg-91, 124–126, Arg-148, Lys-158, Glu-188, Asp-209, 235–237, and 256–258 each bind substrate; these read TRK, SGN, and VGA.

Belongs to the NadC/ModD family. In terms of assembly, hexamer formed by 3 homodimers.

The enzyme catalyses nicotinate beta-D-ribonucleotide + CO2 + diphosphate = quinolinate + 5-phospho-alpha-D-ribose 1-diphosphate + 2 H(+). The protein operates within cofactor biosynthesis; NAD(+) biosynthesis; nicotinate D-ribonucleotide from quinolinate: step 1/1. In terms of biological role, involved in the catabolism of quinolinic acid (QA). This chain is Probable nicotinate-nucleotide pyrophosphorylase [carboxylating] (nadC), found in Helicobacter pylori (strain ATCC 700392 / 26695) (Campylobacter pylori).